The chain runs to 468 residues: Acetyl-CoA decarbonylase/synthase complex subunit gamma 2 (468 aa).

One can recognise a 4Fe-4S domain in the interval 1-60 (MKINSPLEAYKYLPQTNCGECGEATCMAFASKLIDRSGKPTQCPPLVKEKKFAKKLAELE). Residues Cys18, Cys21, Cys26, and Cys43 each contribute to the [4Fe-4S] cluster site.

In terms of assembly, heterodimer of delta and gamma chains. The ACDS complex is made up of alpha, epsilon, beta, gamma and delta chains with a probable stoichiometry of (alpha(2)epsilon(2))(4)-beta(8)-(gamma(1)delta(1))(8). Corrinoid serves as cofactor. Requires [4Fe-4S] cluster as cofactor.

It carries out the reaction 5,6,7,8-tetrahydrosarcinapterin + methyl-Co(III)-[corrinoid Fe-S protein] = 5-methyltetrahydrosarcinapterin + Co(I)-[corrinoid Fe-S protein] + H(+). The protein operates within one-carbon metabolism; methanogenesis from acetate. Functionally, part of a complex that catalyzes the reversible cleavage of acetyl-CoA, allowing growth on acetate as sole source of carbon and energy. The protein is Acetyl-CoA decarbonylase/synthase complex subunit gamma 2 of Methanosarcina thermophila.